The sequence spans 552 residues: Phosphoglucomutase (552 aa).

The active-site Phosphoserine intermediate is Ser143. Ser143, Asp295, Asp297, and Asp299 together coordinate Mg(2+).

This sequence belongs to the phosphohexose mutase family. Mg(2+) serves as cofactor.

The catalysed reaction is alpha-D-glucose 1-phosphate = alpha-D-glucose 6-phosphate. It participates in glycolipid metabolism; diglucosyl-diacylglycerol biosynthesis. In terms of biological role, catalyzes the interconversion between glucose-6-phosphate and alpha-glucose-1-phosphate. This is the first step in the biosynthesis of diglucosyl-diacylglycerol (Glc2-DAG), i.e. the predominant glycolipid found in the S.aureus membrane, which is also used as a membrane anchor for lipoteichoic acid (LTA). The polypeptide is Phosphoglucomutase (pgcA) (Staphylococcus aureus (strain MRSA252)).